A 206-amino-acid polypeptide reads, in one-letter code: dTTP/UTP pyrophosphatase (206 aa).

Catalysis depends on aspartate 79, which acts as the Proton acceptor.

It belongs to the Maf family. YhdE subfamily. It depends on a divalent metal cation as a cofactor.

The protein resides in the cytoplasm. It catalyses the reaction dTTP + H2O = dTMP + diphosphate + H(+). It carries out the reaction UTP + H2O = UMP + diphosphate + H(+). Nucleoside triphosphate pyrophosphatase that hydrolyzes dTTP and UTP. May have a dual role in cell division arrest and in preventing the incorporation of modified nucleotides into cellular nucleic acids. This Rhizobium etli (strain ATCC 51251 / DSM 11541 / JCM 21823 / NBRC 15573 / CFN 42) protein is dTTP/UTP pyrophosphatase.